A 71-amino-acid chain; its full sequence is Small ribosomal subunit protein bS21 (71 aa).

A disordered region spans residues K40–Y71. Residues Q43–R59 are compositionally biased toward basic residues. Over residues L60–Y71 the composition is skewed to basic and acidic residues.

It belongs to the bacterial ribosomal protein bS21 family.

This chain is Small ribosomal subunit protein bS21, found in Halorhodospira halophila (strain DSM 244 / SL1) (Ectothiorhodospira halophila (strain DSM 244 / SL1)).